A 533-amino-acid polypeptide reads, in one-letter code: Lymphocyte cytosolic protein 2 (533 aa).

In terms of domain architecture, SAM spans 15–81 (WDPDSLADYF…INKNEERRSI (67 aa)). Tyr-23 is modified (phosphotyrosine). The interval 78-417 (RRSIFTRKPQ…PPSPAEEENS (340 aa)) is disordered. Acidic residues predominate over residues 108–155 (FEEDDYESPNDDQDGEDDGDYESPNEEEEAPVEDDADYEPPPSNDEEA). Residues 184–213 (QQPPVPPQRPMAALPPPPAGRNHSPLPPPQ) show a composition bias toward pro residues. Position 207 is a phosphoserine (Ser-207). 2 stretches are compositionally biased toward polar residues: residues 337 to 350 (MSSN…TKPS) and 365 to 376 (SESNSSFPQSAS). Residues Ser-376 and Ser-410 each carry the phosphoserine modification. Positions 400–411 (LPLPNKPRPPSP) are enriched in pro residues. The region spanning 422–530 (WYVSYITRPE…RYQCTLTHAA (109 aa)) is the SH2 domain.

Interacts with SLA. Interacts with CBLB. Interacts with GRB2. Interacts with SHB. Interacts with PRAM1. Interacts (via SH2 domain) with CD6 (via tyrosine phosphorylated C-terminus). Interacts with FYB1 and the phosphorylated form of FYB2. Interacts with 14-3-3 adapter/YWHAZ; this phosphorylation leads to YWHAZ proteolytic degradation. Interacts with VAV1; this interaction plays a role in TCR-mediated cytokine production. Interacts with AGER; this interaction plays an important role in AGER-mediated pro-inflammatory responses and cytokine release. In terms of processing, phosphorylated after T-cell receptor activation by ZAP70, ITK and TXK, which leads to the up-regulation of Th1 preferred cytokine IL-2. SYK-dependent phosphorylation is required for recruitment of PI3K signaling components. Highly expressed in spleen, thymus and peripheral blood leukocytes. Highly expressed also in T-cell and monocytic cell lines, expressed at lower level in B-cell lines. Not detected in fibroblast or neuroblastoma cell lines.

The protein resides in the cytoplasm. Its function is as follows. Adapter protein primarily involved in signaling pathways within T-cells, as well as other immune cells such as platelets, mast cells, and natural killer (NK) cells. Plays a crucial role for transducing signal from the T-cell receptor (TCR) after antigen recognition leading to T-cell activation. Mechanistically, once phosphorylated by the kinase ZAP70, mediates interactions with the guanine-nucleotide exchange factor VAV1, the adapter protein NCK and the kinase ITK. In turn, stimulates the activation of PKC-theta/PRKCQ and NF-kappa-B transcriptional activity in response to CD3 and CD28 costimulation. Also plays an essential role in AGER-induced signaling pathways including p38 MAPK and ERK1/2 activation leading to cytokine release and pro-inflammatory responses. This Homo sapiens (Human) protein is Lymphocyte cytosolic protein 2 (LCP2).